A 104-amino-acid polypeptide reads, in one-letter code: Phosphoribosyl-ATP pyrophosphatase (104 aa).

It belongs to the PRA-PH family.

Its subcellular location is the cytoplasm. The catalysed reaction is 1-(5-phospho-beta-D-ribosyl)-ATP + H2O = 1-(5-phospho-beta-D-ribosyl)-5'-AMP + diphosphate + H(+). Its pathway is amino-acid biosynthesis; L-histidine biosynthesis; L-histidine from 5-phospho-alpha-D-ribose 1-diphosphate: step 2/9. The chain is Phosphoribosyl-ATP pyrophosphatase from Streptococcus sanguinis (strain SK36).